A 712-amino-acid polypeptide reads, in one-letter code: Patatin-like phospholipase domain-containing protein AFUA_1G04970 (712 aa).

The segment covering 1–13 (MTSDEKSATRDIY) has biased composition (basic and acidic residues). The disordered stretch occupies residues 1 to 20 (MTSDEKSATRDIYDPNTLPD). The helical transmembrane segment at 85 to 105 (WPFLFTVFAWITVLGFAYTLT) threads the bilayer. One can recognise a PNPLA domain in the interval 275 to 466 (LCLSGGATFA…RTDIPIKALN (192 aa)). The GXSXG signature appears at 306–310 (GTSGG). Ser-308 acts as the Nucleophile in catalysis. Asp-453 serves as the catalytic Proton acceptor. The interval 628 to 688 (RRRQDRAQEH…PDARRSSMFE (61 aa)) is disordered. 2 stretches are compositionally biased toward basic and acidic residues: residues 632-646 (DRAQEHADRMVERLD) and 652-664 (RQSDYKDESHYAE). Residues 667–676 (DSLSATSSRP) show a composition bias toward polar residues. A compositionally biased stretch (basic and acidic residues) spans 677-688 (HTPDARRSSMFE).

This sequence belongs to the PLPL family.

It is found in the membrane. Functionally, probable lipid hydrolase. This chain is Patatin-like phospholipase domain-containing protein AFUA_1G04970, found in Aspergillus fumigatus (strain ATCC MYA-4609 / CBS 101355 / FGSC A1100 / Af293) (Neosartorya fumigata).